Here is a 92-residue protein sequence, read N- to C-terminus: Small ribosomal subunit protein uS19 (92 aa).

Belongs to the universal ribosomal protein uS19 family.

Protein S19 forms a complex with S13 that binds strongly to the 16S ribosomal RNA. In Prochlorococcus marinus (strain MIT 9301), this protein is Small ribosomal subunit protein uS19.